We begin with the raw amino-acid sequence, 125 residues long: Small ribosomal subunit protein uS12 (125 aa).

The segment at 9-31 (RQGREVEKIKSKSPAMENSPQRR) is disordered. D89 is subject to 3-methylthioaspartic acid. The interval 106–125 (GVKDRKQSRSKYGAKRPKKA) is disordered. The span at 113 to 125 (SRSKYGAKRPKKA) shows a compositional bias: basic residues.

The protein belongs to the universal ribosomal protein uS12 family. As to quaternary structure, part of the 30S ribosomal subunit. Contacts proteins S8 and S17. May interact with IF1 in the 30S initiation complex.

Functionally, with S4 and S5 plays an important role in translational accuracy. In terms of biological role, interacts with and stabilizes bases of the 16S rRNA that are involved in tRNA selection in the A site and with the mRNA backbone. Located at the interface of the 30S and 50S subunits, it traverses the body of the 30S subunit contacting proteins on the other side and probably holding the rRNA structure together. The combined cluster of proteins S8, S12 and S17 appears to hold together the shoulder and platform of the 30S subunit. The protein is Small ribosomal subunit protein uS12 of Polaromonas sp. (strain JS666 / ATCC BAA-500).